A 234-amino-acid chain; its full sequence is Large ribosomal subunit protein uL1 (234 aa).

This sequence belongs to the universal ribosomal protein uL1 family. In terms of assembly, part of the 50S ribosomal subunit.

In terms of biological role, binds directly to 23S rRNA. The L1 stalk is quite mobile in the ribosome, and is involved in E site tRNA release. Functionally, protein L1 is also a translational repressor protein, it controls the translation of the L11 operon by binding to its mRNA. The polypeptide is Large ribosomal subunit protein uL1 (Pectobacterium atrosepticum (strain SCRI 1043 / ATCC BAA-672) (Erwinia carotovora subsp. atroseptica)).